The sequence spans 523 residues: GMP synthase [glutamine-hydrolyzing] (523 aa).

Positions 8-205 constitute a Glutamine amidotransferase type-1 domain; that stretch reads KILILDFGSQ…VVDICGCETN (198 aa). The Nucleophile role is filled by cysteine 85. Active-site residues include histidine 179 and glutamate 181. In terms of domain architecture, GMPS ATP-PPase spans 206-398; sequence WTAENIIEDA…LGLPAEMLNR (193 aa). 233–239 lines the ATP pocket; that stretch reads SGGVDSS.

Homodimer.

It catalyses the reaction XMP + L-glutamine + ATP + H2O = GMP + L-glutamate + AMP + diphosphate + 2 H(+). Its pathway is purine metabolism; GMP biosynthesis; GMP from XMP (L-Gln route): step 1/1. Functionally, catalyzes the synthesis of GMP from XMP. This Histophilus somni (strain 2336) (Haemophilus somnus) protein is GMP synthase [glutamine-hydrolyzing].